Reading from the N-terminus, the 103-residue chain is Putative glutaredoxin-C12 (103 aa).

Residues 1–102 form the Glutaredoxin domain; that stretch reads MERVRDLASE…QMLKASNAIW (102 aa). Cys-21 and Cys-24 form a disulfide bridge.

The protein belongs to the glutaredoxin family. CC-type subfamily.

It localises to the cytoplasm. In terms of biological role, has a glutathione-disulfide oxidoreductase activity in the presence of NADPH and glutathione reductase. Reduces low molecular weight disulfides and proteins. The chain is Putative glutaredoxin-C12 (GRXC12) from Arabidopsis thaliana (Mouse-ear cress).